Consider the following 163-residue polypeptide: ADP-ribosylation factor-like protein 2-binding protein (163 aa).

The protein belongs to the ARL2BP family. Interacts with GTP bound ARL2 and ARL3; the complex ARL2-ARL2BP as well as ARL2BP alone, binds to SLC25A4/ANT1. Interaction with ARL2 may be required for targeting to cilia basal body. Interacts with STAT3; interaction is enhanced with ARL2. Found in a complex with ARL2BP, ARL2 and SLC25A6. Found in a complex with ARL2, ARL2BP and SLC25A4. Interacts with STAT2, STAT3 and STAT4. As to expression, widely expressed, with most abundant activity in brain, especially in hippocampus and cortex. Also expressed in lung, cerebellum, liver, kidney, retina, spleen, muscle and heart (at protein level).

The protein localises to the cytoplasm. The protein resides in the mitochondrion intermembrane space. Its subcellular location is the cytoskeleton. It is found in the microtubule organizing center. It localises to the centrosome. The protein localises to the nucleus. The protein resides in the cilium basal body. Together with ARL2, plays a role in the nuclear translocation, retention and transcriptional activity of STAT3. May play a role as an effector of ARL2. The polypeptide is ADP-ribosylation factor-like protein 2-binding protein (Arl2bp) (Mus musculus (Mouse)).